We begin with the raw amino-acid sequence, 156 residues long: 6,7-dimethyl-8-ribityllumazine synthase (156 aa).

5-amino-6-(D-ribitylamino)uracil contacts are provided by residues phenylalanine 25, 59-61 (AFE), and 83-85 (AVI). 88–89 (GT) contributes to the (2S)-2-hydroxy-3-oxobutyl phosphate binding site. Histidine 91 (proton donor) is an active-site residue. Phenylalanine 116 is a binding site for 5-amino-6-(D-ribitylamino)uracil. Arginine 130 is a binding site for (2S)-2-hydroxy-3-oxobutyl phosphate.

It belongs to the DMRL synthase family.

It carries out the reaction (2S)-2-hydroxy-3-oxobutyl phosphate + 5-amino-6-(D-ribitylamino)uracil = 6,7-dimethyl-8-(1-D-ribityl)lumazine + phosphate + 2 H2O + H(+). It participates in cofactor biosynthesis; riboflavin biosynthesis; riboflavin from 2-hydroxy-3-oxobutyl phosphate and 5-amino-6-(D-ribitylamino)uracil: step 1/2. Functionally, catalyzes the formation of 6,7-dimethyl-8-ribityllumazine by condensation of 5-amino-6-(D-ribitylamino)uracil with 3,4-dihydroxy-2-butanone 4-phosphate. This is the penultimate step in the biosynthesis of riboflavin. The chain is 6,7-dimethyl-8-ribityllumazine synthase from Desulfovibrio desulfuricans (strain ATCC 27774 / DSM 6949 / MB).